The chain runs to 160 residues: Cytochrome b6-f complex subunit 4 (160 aa).

3 helical membrane passes run Leu36–Val56, Leu95–Glu115, and Thr131–Ile151.

The protein belongs to the cytochrome b family. PetD subfamily. The 4 large subunits of the cytochrome b6-f complex are cytochrome b6, subunit IV (17 kDa polypeptide, petD), cytochrome f and the Rieske protein, while the 4 small subunits are petG, petL, petM and petN. The complex functions as a dimer.

The protein resides in the plastid. It is found in the chloroplast thylakoid membrane. Functionally, component of the cytochrome b6-f complex, which mediates electron transfer between photosystem II (PSII) and photosystem I (PSI), cyclic electron flow around PSI, and state transitions. The sequence is that of Cytochrome b6-f complex subunit 4 from Physcomitrium patens (Spreading-leaved earth moss).